Here is a 136-residue protein sequence, read N- to C-terminus: Ribonuclease VapC47 (136 aa).

A PINc domain is found at 2 to 104; sequence IYMDTSALTK…AIHLAAAAQI (103 aa). D5 and D94 together coordinate Mg(2+).

The protein belongs to the PINc/VapC protein family. It depends on Mg(2+) as a cofactor.

In terms of biological role, toxic component of a type II toxin-antitoxin (TA) system. An RNase. Its toxic effect on colony formation is neutralized by coexpression with cognate antitoxin VapB47. In Mycobacterium tuberculosis (strain CDC 1551 / Oshkosh), this protein is Ribonuclease VapC47.